Here is a 118-residue protein sequence, read N- to C-terminus: uncharacterized protein (118 aa).

This is an uncharacterized protein from Saccharomyces cerevisiae (strain ATCC 204508 / S288c) (Baker's yeast).